We begin with the raw amino-acid sequence, 204 residues long: FMN-dependent NADH:quinone oxidoreductase (204 aa).

FMN-binding positions include Ser9, 15 to 17 (SVS), and 97 to 100 (MYNF).

It belongs to the azoreductase type 1 family. Homodimer. It depends on FMN as a cofactor.

The catalysed reaction is 2 a quinone + NADH + H(+) = 2 a 1,4-benzosemiquinone + NAD(+). It catalyses the reaction N,N-dimethyl-1,4-phenylenediamine + anthranilate + 2 NAD(+) = 2-(4-dimethylaminophenyl)diazenylbenzoate + 2 NADH + 2 H(+). In terms of biological role, quinone reductase that provides resistance to thiol-specific stress caused by electrophilic quinones. Also exhibits azoreductase activity. Catalyzes the reductive cleavage of the azo bond in aromatic azo compounds to the corresponding amines. In Methylobacterium radiotolerans (strain ATCC 27329 / DSM 1819 / JCM 2831 / NBRC 15690 / NCIMB 10815 / 0-1), this protein is FMN-dependent NADH:quinone oxidoreductase.